The following is an 809-amino-acid chain: Phenylalanine--tRNA ligase beta subunit (809 aa).

The tRNA-binding domain maps to 39-152 (KDKWPNVYVG…ADALVGMLAS (114 aa)). Residues 404–492 (KERNGIVLSL…RIAGYHTIPC (89 aa)) form the B5 domain. Mg(2+) contacts are provided by Asp470, Asp476, Glu479, and Glu480. The FDX-ACB domain occupies 717–808 (NRFPAVERDL…LNTETGAVLR (92 aa)).

The protein belongs to the phenylalanyl-tRNA synthetase beta subunit family. Type 1 subfamily. In terms of assembly, tetramer of two alpha and two beta subunits. Requires Mg(2+) as cofactor.

It is found in the cytoplasm. The enzyme catalyses tRNA(Phe) + L-phenylalanine + ATP = L-phenylalanyl-tRNA(Phe) + AMP + diphosphate + H(+). The protein is Phenylalanine--tRNA ligase beta subunit of Dehalococcoides mccartyi (strain CBDB1).